The chain runs to 464 residues: MNWNAILPEAILAIGILTVFILELFLERKHYKFLSVLAFIFVVLSGYSIFFVNYPAKLFFDGFSVDALNLIGKLFILAVTGFVLLSSYDYFSKKNSQYGELPYLYLIATLGLMVMISSDNLAIIFTGLELASITMYILVGLFRREYLSKEGAFKYLVIGTTGTSMYALGSALVYASSGSMVLSPVKEENTLFALGVILIISALALKVSAVPFHFWTPDAYEGAPTPTTAYLSTVPKIGMYFLFVKLTMYLFSAFPDWKYVVMLLAVLSMFYGNIVAYAQKSVKRLLAYSSIAHAGYFLTALTAVDKHLFSALLFYVFVYALATVGAFTVLAILEKKEGWTHHFLDFKGLKEENPVLASMLALFLFALIGIPPAAVFLGKLGIFFGLVKTDMFALGILFAIASLISAGYYLKVIVYMFLYSGEVRHGQTTVSAGEAFTVLGTAFLVIFFGLFPHVVLDFILRALS.

The next 14 helical transmembrane spans lie at 6-26 (ILPE…ELFL), 33-53 (FLSV…FFVN), 65-85 (VDAL…FVLL), 98-118 (YGEL…MISS), 122-142 (AIIF…VGLF), 155-175 (YLVI…LVYA), 192-212 (FALG…AVPF), 237-257 (IGMY…FPDW), 259-279 (YVVM…AYAQ), 285-305 (LLAY…TAVD), 312-332 (LLFY…VLAI), 356-376 (LASM…AAVF), 401-421 (ASLI…LYSG), and 436-456 (FTVL…HVVL).

The protein belongs to the complex I subunit 2 family. NDH-1 is composed of 14 different subunits. Subunits NuoA, H, J, K, L, M, N constitute the membrane sector of the complex.

The protein localises to the cell inner membrane. It carries out the reaction a quinone + NADH + 5 H(+)(in) = a quinol + NAD(+) + 4 H(+)(out). Its function is as follows. NDH-1 shuttles electrons from NADH, via FMN and iron-sulfur (Fe-S) centers, to quinones in the respiratory chain. The immediate electron acceptor for the enzyme in this species is believed to be ubiquinone. Couples the redox reaction to proton translocation (for every two electrons transferred, four hydrogen ions are translocated across the cytoplasmic membrane), and thus conserves the redox energy in a proton gradient. This chain is NADH-quinone oxidoreductase subunit N 1, found in Aquifex aeolicus (strain VF5).